Here is a 322-residue protein sequence, read N- to C-terminus: Carnosine N-methyltransferase 2 (322 aa).

E58 is a substrate binding site. Residues G90, E119, S150, and I172 each contribute to the S-adenosyl-L-methionine site. N313 contributes to the substrate binding site.

It belongs to the class I-like SAM-binding methyltransferase superfamily. HNMT family. As to quaternary structure, monomer.

It carries out the reaction carnosine + S-adenosyl-L-methionine = anserine + S-adenosyl-L-homocysteine + H(+). In terms of biological role, N-methyltransferase that mediates the formation of anserine (beta-alanyl-N(Pi)-methyl-L-histidine) from carnosine. Anserine, a methylated derivative of carnosine (beta-alanyl-L-histidine), is an abundant constituent of vertebrate skeletal muscles. The polypeptide is Carnosine N-methyltransferase 2 (Gallus gallus (Chicken)).